The sequence spans 403 residues: MSATLASPLRALLRLGLIPQIVIGIALGVGVAIVWPDAATSVALLGQVFISALKAVAPILVFLLVMTAIANHRRGQPTHIRGVLLLYVVGTLCAALVAVLASFIFPTSLVIDAPQASGEPPGGIAEILRNLLLNVVDNPVNALLNANFVGILAWAMGLGMMLRGASETTLVVLNAFSDAVSSIVQLVIRCAPLGIFGLVAGTLADTGLNALLDYAHLLAVIVGCMLFVALVTNPLIVFLATRRNPYPLVFACLRGSAITAFFTRSSAANIPVNMELCKRLDLHPDTYSISIPLGATINMAGAAVTISVITLAATHTLGIGVDFATALLLCVVASLAACGVSGVAGGSLLLIPMAASLFGISPDVAMQVVAIGFVISVVQDATETALNSSTDVLFTAAACRARR.

Transmembrane regions (helical) follow at residues 15-35 (LGLI…AIVW), 49-69 (FISA…MTAI), 85-105 (LLYV…SFIF), 142-162 (ALLN…GMML), 183-203 (IVQL…AGTL), 218-238 (LAVI…LIVF), 246-268 (YPLV…SSAA), 289-309 (ISIP…ISVI), 317-337 (LGIG…SLAA), and 362-382 (PDVA…QDAT).

The protein belongs to the dicarboxylate/amino acid:cation symporter (DAACS) (TC 2.A.23) family.

It localises to the cell inner membrane. The enzyme catalyses L-serine(in) + Na(+)(in) = L-serine(out) + Na(+)(out). It catalyses the reaction L-threonine(in) + Na(+)(in) = L-threonine(out) + Na(+)(out). In terms of biological role, involved in the import of serine and threonine into the cell, with the concomitant import of sodium (symport system). This is Serine/threonine transporter SstT from Chromohalobacter salexigens (strain ATCC BAA-138 / DSM 3043 / CIP 106854 / NCIMB 13768 / 1H11).